The sequence spans 510 residues: ATP synthase subunit alpha (510 aa).

169 to 176 (GDRQTGKT) lines the ATP pocket.

Belongs to the ATPase alpha/beta chains family. In terms of assembly, F-type ATPases have 2 components, CF(1) - the catalytic core - and CF(0) - the membrane proton channel. CF(1) has five subunits: alpha(3), beta(3), gamma(1), delta(1), epsilon(1). CF(0) has four main subunits: a(1), b(1), b'(1) and c(9-12).

It is found in the cell inner membrane. The enzyme catalyses ATP + H2O + 4 H(+)(in) = ADP + phosphate + 5 H(+)(out). Functionally, produces ATP from ADP in the presence of a proton gradient across the membrane. The alpha chain is a regulatory subunit. The polypeptide is ATP synthase subunit alpha (Rhodopseudomonas palustris (strain BisA53)).